Reading from the N-terminus, the 116-residue chain is M-zodatoxin-Lt6a/c (116 aa).

Residues 1–22 form the signal peptide; the sequence is MKYFVVALTLAVAFVCIEECKT. 2 propeptides span residues 23–44 and 80–83; these read VEIG…DEAR and EEAR. 2 consecutive short sequence motifs (processing quadruplet motif) follow at residues 41-44 and 80-83; these read DEAR and EEAR. Residue glutamine 84 is modified to Pyrrolidone carboxylic acid.

It belongs to the cationic peptide 03 (latarcin) family. 06 subfamily. Post-translationally, cleavage of the propeptide depends on the processing quadruplet motif (XXXR, with at least one of X being E). In terms of tissue distribution, expressed by the venom gland.

The protein localises to the secreted. Its function is as follows. Does not have antimicrobial activity against Gram-positive bacteria (A.globiformis VKM Ac-1112 (MIC&gt;70 uM) and B.subtilis VKM B-501 (MIC&gt;70 uM)), Gram-negative bacteria (E.coli DH5-alpha (MIC&gt;70 uM), E.coli MH1 (MIC&gt;70 uM) and P.aeruginosa PAO1 (MIC&gt;70 uM)), yeast (P.pastoris GS115 (MIC&gt;70 uM) or S.cerevisiae Y190 (MIC&gt;70 uM)). Does not have hemolytic activity against rabbit erythrocytes. However, it causes some conductance changes in planar bilayer membranes, without membrane rupture, suggesting a cytolytic function on other biological targets. It causes paralysis, but is not lethal when injected into insect larvae. This is M-zodatoxin-Lt6a/c from Lachesana tarabaevi (Spider).